The sequence spans 244 residues: Ethylene-responsive transcription factor ERF013 (244 aa).

Residues 1–33 (MVKQELKIQVTTSSSSLSHSSSSSSSSTSALRH) form a disordered region. Residues 11–29 (TTSSSSLSHSSSSSSSSTS) show a composition bias toward low complexity. Positions 42–99 (KYKGVRMRSWGSWVTEIRAPNQKTRIWLGSYSTAEAAARAYDAALLCLKGPKANLNFP) form a DNA-binding region, AP2/ERF. The disordered stretch occupies residues 123 to 178 (QKVAAQAANSSSDHFTPPSDENDHDHDDGLDHHPSASSSAASSPPDDDHHNDDDGD). Residues 143–156 (ENDHDHDDGLDHHP) show a composition bias toward basic and acidic residues. Residues 157–166 (SASSSAASSP) are compositionally biased toward low complexity.

Belongs to the AP2/ERF transcription factor family. ERF subfamily.

It localises to the nucleus. Its function is as follows. Probably acts as a transcriptional activator. Binds to the GCC-box pathogenesis-related promoter element. May be involved in the regulation of gene expression by stress factors and by components of stress signal transduction pathways. The polypeptide is Ethylene-responsive transcription factor ERF013 (ERF013) (Arabidopsis thaliana (Mouse-ear cress)).